A 423-amino-acid chain; its full sequence is uncharacterized protein (423 aa).

This is an uncharacterized protein from Rhizobium meliloti (strain 1021) (Ensifer meliloti).